We begin with the raw amino-acid sequence, 600 residues long: Cationic amino acid transporter 4, vacuolar (600 aa).

Residues 1–32 lie on the Cytoplasmic side of the membrane; the sequence is MNSLVRRKQVDSVHLIKNDGPHQLAKKLSAVD. The helical transmembrane segment at 33–53 threads the bilayer; that stretch reads LVAIGVGTTIGAGVYILVGTV. The Vacuolar portion of the chain corresponds to 54-60; sequence AREHTGP. A helical membrane pass occupies residues 61-81; that stretch reads ALAVSFFIAGVAAALSACCYA. Over 82–92 the chain is Cytoplasmic; it reads ELASRCPSAGS. Residues 93–115 form a helical membrane-spanning segment; that stretch reads AYHYAYICLGEGIAWLVGWALVL. The Vacuolar portion of the chain corresponds to 116–152; that stretch reads DYTIGGSAIARGITPNLASFFGGLDNLPVFLARQTIP. The chain crosses the membrane as a helical span at residues 153-173; it reads GVGIVVDPCAALLIMIVTILL. At 174 to 184 the chain is on the cytoplasmic side; the sequence is CFGIKESSTVQ. A helical transmembrane segment spans residues 185–205; sequence AIVTSVNVCTLVFIIVVGGYL. Topologically, residues 206-220 are vacuolar; that stretch reads ACKTGWVGYDLPSGY. A helical transmembrane segment spans residues 221-241; that stretch reads FPFGLNGILAGSAVVFFSYIG. The Cytoplasmic portion of the chain corresponds to 242-264; the sequence is FDTVTSTAEEVKNPQRDLPLGIG. Residues 265–285 form a helical membrane-spanning segment; that stretch reads IALLICCILYMLLSVVIVGLV. The Vacuolar portion of the chain corresponds to 286-308; the sequence is PYYSLNPDTPISSAFGDSGMQWA. Residues 309–329 traverse the membrane as a helical segment; it reads AYILTTGAITALCASLLGSLL. Residues 330 to 360 lie on the Cytoplasmic side of the membrane; the sequence is AQPRIFMAMARDGLLPAFFSEISPRTQVPVK. A helical transmembrane segment spans residues 361 to 381; it reads STIAIGVLAAALAFFMDVAQL. Position 382 (S382) is a topological domain, vacuolar. Residues 383-403 traverse the membrane as a helical segment; the sequence is EMVSVGTLMAFTAVAVCVLVL. At 404–462 the chain is on the cytoplasmic side; the sequence is RYVPPDGVPLSSSSQTLSDTDESRAETENFLVDAIESSDSPLLGNETARDEKYFGKRRK. The helical transmembrane segment at 463-483 threads the bilayer; it reads IAAWSIALVCIGVLGLASAAS. The Vacuolar segment spans residues 484 to 492; it reads AERLPSFPR. The chain crosses the membrane as a helical span at residues 493–513; that stretch reads FTICGVSAVILLGSLITLGYI. Over 514–528 the chain is Cytoplasmic; the sequence is DEDEERHNFGHKGGF. Residues 529–549 form a helical membrane-spanning segment; it reads LCPFVPYLPVLCILINTYLII. Position 550 (N550) is a topological domain, vacuolar. Residues 551–571 traverse the membrane as a helical segment; sequence IGAGTWIRVLIWLLIGSMIYI. The Cytoplasmic portion of the chain corresponds to 572-600; it reads FYGRSHSLLNNAVYVPTMTCTRKTTDHLA.

This sequence belongs to the amino acid-polyamine-organocation (APC) superfamily. Cationic amino acid transporter (CAT) (TC 2.A.3.3) family. Expressed in roots, stems, flowers, and leaves.

It localises to the vacuole membrane. Its function is as follows. Permease involved in the transport of the cationic amino acids. This Arabidopsis thaliana (Mouse-ear cress) protein is Cationic amino acid transporter 4, vacuolar (CAT4).